A 71-amino-acid polypeptide reads, in one-letter code: U3-agatoxin-Ao1a (71 aa).

Positions 1-20 (MKAVIFFCLLSVMVFTVIEA) are cleaved as a signal peptide. The propeptide occupies 21–33 (VKEEGTKPAEAAR). 4 cysteine pairs are disulfide-bonded: Cys-35-Cys-51, Cys-42-Cys-56, Cys-50-Cys-66, and Cys-58-Cys-64. Serine amide is present on Ser-70.

It belongs to the neurotoxin 07 (Beta/delta-agtx) family. 01 (aga-2) subfamily. Expressed by the venom gland.

The protein resides in the secreted. Its function is as follows. Insecticidal neurotoxin that modulates the insect Nav channel (DmNaV1/tipE (para/tipE)) in a unique manner, with both the activation and inactivation processes being affected. The voltage dependence of activation is shifted toward more hyperpolarized potentials (analogous to site 4 toxins) and a non-inactivating persistent sodium current is induced (site 3-like action). Interestingly, both effects take place in a voltage-dependent manner, producing a bell-shaped curve between -80 and 0 mV. Compared to beta/delta-agatoxin-1 to -3, this toxin appears to affect the insect sodium channel only weakly. The sequence is that of U3-agatoxin-Ao1a from Agelena orientalis (Funnel-web spider).